The following is a 702-amino-acid chain: Glucoamylase (702 aa).

An N-terminal signal peptide occupies residues 1 to 21 (MSRKLIKYLPLLVLASSVLSG). Residue Cys22 is the site of N-palmitoyl cysteine attachment. A lipid anchor (S-diacylglycerol cysteine) is attached at Cys22. Position 342 (Trp342) interacts with substrate. Glu452 acts as the Proton acceptor in catalysis. Catalysis depends on Glu455, which acts as the Proton donor.

Belongs to the glycosyl hydrolase 15 family.

The protein resides in the cell membrane. The catalysed reaction is Hydrolysis of terminal (1-&gt;4)-linked alpha-D-glucose residues successively from non-reducing ends of the chains with release of beta-D-glucose.. Its function is as follows. CGA has typical kinetic properties for a glucoamylase, but this bacterial enzyme had higher isomaltose-hydrolyzing activity than other eukaryotic glucoamylases. This is Glucoamylase (cga) from Clostridium sp. (strain G0005).